A 130-amino-acid polypeptide reads, in one-letter code: Sulfurtransferase TusD (130 aa).

Cys-80 functions as the Cysteine persulfide intermediate in the catalytic mechanism.

It belongs to the DsrE/TusD family. Heterohexamer, formed by a dimer of trimers. The hexameric TusBCD complex contains 2 copies each of TusB, TusC and TusD. The TusBCD complex interacts with TusE.

The protein resides in the cytoplasm. In terms of biological role, part of a sulfur-relay system required for 2-thiolation of 5-methylaminomethyl-2-thiouridine (mnm(5)s(2)U) at tRNA wobble positions. Accepts sulfur from TusA and transfers it in turn to TusE. The chain is Sulfurtransferase TusD from Sodalis glossinidius (strain morsitans).